The sequence spans 767 residues: Photosystem I P700 chlorophyll a apoprotein A1 (767 aa).

The tract at residues 1 to 22 (MTISPPESGEKNKKVLEDPVKA) is disordered. The segment covering 8–22 (SGEKNKKVLEDPVKA) has biased composition (basic and acidic residues). A run of 8 helical transmembrane segments spans residues 76 to 99 (IFSA…FHGA), 162 to 185 (LMAL…FHYH), 201 to 225 (LNHH…HIGA), 309 to 327 (VSHH…GHMY), 368 to 391 (RHAQ…HHMY), 407 to 433 (LGLF…IAMV), 455 to 477 (ALIS…LYIH), and 558 to 576 (LMIH…LILL). [4Fe-4S] cluster is bound by residues cysteine 600 and cysteine 609. The next 2 membrane-spanning stretches (helical) occupy residues 616-637 (HVFL…HFSW) and 681-703 (ISMY…MFLF). Position 692 (histidine 692) interacts with divinylchlorophyll a'. Methionine 700 and tyrosine 708 together coordinate divinyl chlorophyll a. Position 709 (tryptophan 709) interacts with phylloquinone. The helical transmembrane segment at 741–761 (AVGVTHFLVGGIATTWAFFHA) threads the bilayer.

Belongs to the PsaA/PsaB family. In terms of assembly, the PsaA/B heterodimer binds the P700 divinyl chlorophyll special pair and subsequent electron acceptors. PSI consists of a core antenna complex that captures photons, and an electron transfer chain that converts photonic excitation into a charge separation. The cyanobacterial PSI reaction center is composed of one copy each of PsaA,B,C,D,E,F,I,J,K,L,M and X, and forms trimeric complexes. The cofactor is PSI electron transfer chain: 5 divinyl chlorophyll a, 1 divinyl chlorophyll a', 2 phylloquinones and 3 4Fe-4S clusters. PSI core antenna: 90 divinyl chlorophyll a, 22 carotenoids, 3 phospholipids and 1 galactolipid. P700 is a divinyl chlorophyll a/divinyl chlorophyll a' dimer, A0 is one or more divinyl chlorophyll a, A1 is one or both phylloquinones and FX is a shared 4Fe-4S iron-sulfur center..

It localises to the cellular thylakoid membrane. It catalyses the reaction reduced [plastocyanin] + hnu + oxidized [2Fe-2S]-[ferredoxin] = oxidized [plastocyanin] + reduced [2Fe-2S]-[ferredoxin]. Functionally, psaA and PsaB bind P700, the primary electron donor of photosystem I (PSI), as well as the electron acceptors A0, A1 and FX. PSI is a plastocyanin/cytochrome c6-ferredoxin oxidoreductase, converting photonic excitation into a charge separation, which transfers an electron from the donor P700 chlorophyll pair to the spectroscopically characterized acceptors A0, A1, FX, FA and FB in turn. Oxidized P700 is reduced on the lumenal side of the thylakoid membrane by plastocyanin or cytochrome c6. The polypeptide is Photosystem I P700 chlorophyll a apoprotein A1 (Prochlorococcus marinus (strain AS9601)).